We begin with the raw amino-acid sequence, 613 residues long: Dihydroxy-acid dehydratase (613 aa).

A Mg(2+)-binding site is contributed by Asp-81. Cys-122 serves as a coordination point for [2Fe-2S] cluster. The Mg(2+) site is built by Asp-123 and Lys-124. Lys-124 is modified (N6-carboxylysine). Cys-195 contacts [2Fe-2S] cluster. A Mg(2+)-binding site is contributed by Glu-491. Residue Ser-517 is the Proton acceptor of the active site.

This sequence belongs to the IlvD/Edd family. In terms of assembly, homodimer. [2Fe-2S] cluster is required as a cofactor. Requires Mg(2+) as cofactor.

It catalyses the reaction (2R)-2,3-dihydroxy-3-methylbutanoate = 3-methyl-2-oxobutanoate + H2O. The enzyme catalyses (2R,3R)-2,3-dihydroxy-3-methylpentanoate = (S)-3-methyl-2-oxopentanoate + H2O. It participates in amino-acid biosynthesis; L-isoleucine biosynthesis; L-isoleucine from 2-oxobutanoate: step 3/4. Its pathway is amino-acid biosynthesis; L-valine biosynthesis; L-valine from pyruvate: step 3/4. In terms of biological role, functions in the biosynthesis of branched-chain amino acids. Catalyzes the dehydration of (2R,3R)-2,3-dihydroxy-3-methylpentanoate (2,3-dihydroxy-3-methylvalerate) into 2-oxo-3-methylpentanoate (2-oxo-3-methylvalerate) and of (2R)-2,3-dihydroxy-3-methylbutanoate (2,3-dihydroxyisovalerate) into 2-oxo-3-methylbutanoate (2-oxoisovalerate), the penultimate precursor to L-isoleucine and L-valine, respectively. The chain is Dihydroxy-acid dehydratase from Vibrio cholerae serotype O1 (strain ATCC 39541 / Classical Ogawa 395 / O395).